The primary structure comprises 1362 residues: DNA-directed RNA polymerase subunit beta (1362 aa).

Belongs to the RNA polymerase beta chain family. As to quaternary structure, the RNAP catalytic core consists of 2 alpha, 1 beta, 1 beta' and 1 omega subunit. When a sigma factor is associated with the core the holoenzyme is formed, which can initiate transcription.

The catalysed reaction is RNA(n) + a ribonucleoside 5'-triphosphate = RNA(n+1) + diphosphate. DNA-dependent RNA polymerase catalyzes the transcription of DNA into RNA using the four ribonucleoside triphosphates as substrates. The chain is DNA-directed RNA polymerase subunit beta from Acinetobacter baumannii (strain AB307-0294).